Reading from the N-terminus, the 487-residue chain is Putative B3 domain-containing protein At1g78640 (487 aa).

2 consecutive DNA-binding regions (TF-B3) follow at residues 171–269 (RLLL…QQGT) and 379–474 (RLTL…LFRV).

It localises to the nucleus. In Arabidopsis thaliana (Mouse-ear cress), this protein is Putative B3 domain-containing protein At1g78640.